We begin with the raw amino-acid sequence, 204 residues long: Dual specificity protein phosphatase 18 (204 aa).

Residues 19–160 (GLSQITKSLF…LIHYEFQLFG (142 aa)) form the Tyrosine-protein phosphatase domain. The interval 95–141 (MKQGRTLLHCAAGVSRSAALCLAYLMKYHVMSLLDAHAWTKSRRPII) is sufficient for mitochondrial localization. The active-site Phosphocysteine intermediate is the Cys-104.

The protein belongs to the protein-tyrosine phosphatase family. Non-receptor class dual specificity subfamily.

It is found in the cytoplasm. It localises to the nucleus. The protein localises to the mitochondrion inner membrane. The catalysed reaction is O-phospho-L-tyrosyl-[protein] + H2O = L-tyrosyl-[protein] + phosphate. It carries out the reaction O-phospho-L-seryl-[protein] + H2O = L-seryl-[protein] + phosphate. It catalyses the reaction O-phospho-L-threonyl-[protein] + H2O = L-threonyl-[protein] + phosphate. In terms of biological role, can dephosphorylate single and diphosphorylated synthetic MAPK peptides, with preference for the phosphotyrosine and diphosphorylated forms over phosphothreonine. In vitro, dephosphorylates p-nitrophenyl phosphate (pNPP). The sequence is that of Dual specificity protein phosphatase 18 (Dusp18) from Rattus norvegicus (Rat).